Consider the following 274-residue polypeptide: Large ribosomal subunit protein uL2cz/uL2cy (274 aa).

Disordered regions lie at residues 1–22 (MAIH…DSQV) and 223–274 (MNPV…RRTK).

Belongs to the universal ribosomal protein uL2 family. Part of the 50S ribosomal subunit.

The protein resides in the plastid. The protein localises to the chloroplast. The protein is Large ribosomal subunit protein uL2cz/uL2cy (rpl2-A) of Phaseolus vulgaris (Kidney bean).